A 396-amino-acid chain; its full sequence is Elongation factor Tu (396 aa).

A tr-type G domain is found at Lys-10–Lys-206. Residues Gly-19–Thr-26 form a G1 region. Gly-19–Thr-26 is a binding site for GTP. Thr-26 contributes to the Mg(2+) binding site. The G2 stretch occupies residues Gly-60–Ser-64. Residues Asp-81–Gly-84 are G3. Residues Asp-81–His-85 and Asn-136–Asp-139 contribute to the GTP site. The tract at residues Asn-136–Asp-139 is G4. A G5 region spans residues Ser-174–Leu-176.

The protein belongs to the TRAFAC class translation factor GTPase superfamily. Classic translation factor GTPase family. EF-Tu/EF-1A subfamily. As to quaternary structure, monomer.

The protein localises to the cytoplasm. The enzyme catalyses GTP + H2O = GDP + phosphate + H(+). GTP hydrolase that promotes the GTP-dependent binding of aminoacyl-tRNA to the A-site of ribosomes during protein biosynthesis. The sequence is that of Elongation factor Tu from Dichelobacter nodosus (strain VCS1703A).